We begin with the raw amino-acid sequence, 130 residues long: Ribosome-binding factor A (130 aa).

It belongs to the RbfA family. As to quaternary structure, monomer. Binds 30S ribosomal subunits, but not 50S ribosomal subunits or 70S ribosomes.

The protein localises to the cytoplasm. Functionally, one of several proteins that assist in the late maturation steps of the functional core of the 30S ribosomal subunit. Associates with free 30S ribosomal subunits (but not with 30S subunits that are part of 70S ribosomes or polysomes). Required for efficient processing of 16S rRNA. May interact with the 5'-terminal helix region of 16S rRNA. The sequence is that of Ribosome-binding factor A from Roseiflexus castenholzii (strain DSM 13941 / HLO8).